Here is a 640-residue protein sequence, read N- to C-terminus: Probable potassium transport system protein Kup 2 (640 aa).

The disordered stretch occupies residues 1-20 (MTADIAATPAETPATNGHGD). Helical transmembrane passes span 30–50 (LTLG…LYAL), 71–91 (VVSL…VVIL), 117–137 (ASII…DAVI), 155–175 (AAFD…LFAV), 183–203 (VAAF…IAAF), 224–244 (FMLH…LAVT), 265–285 (WLFV…ALVI), 294–314 (PFFL…ATVA), 363–383 (LLLV…ALAS), 385–405 (YGIS…VVIW), 410–430 (WSPI…LTFL), and 437–457 (VLEG…LMYT).

The protein belongs to the HAK/KUP transporter (TC 2.A.72) family.

Its subcellular location is the cell inner membrane. The enzyme catalyses K(+)(in) + H(+)(in) = K(+)(out) + H(+)(out). In terms of biological role, transport of potassium into the cell. Likely operates as a K(+):H(+) symporter. The polypeptide is Probable potassium transport system protein Kup 2 (Bradyrhizobium sp. (strain ORS 278)).